A 302-amino-acid polypeptide reads, in one-letter code: Spermidine synthase (302 aa).

Met-1 is subject to N-acetylmethionine. A PABS domain is found at 18 to 253 (EGWFRETCSL…GQIGFMLCSK (236 aa)). Gln-49 is an S-adenosyl 3-(methylsulfanyl)propylamine binding site. Tyr-79 serves as a coordination point for putrescine. S-adenosyl 3-(methylsulfanyl)propylamine-binding positions include Gln-80, Asp-104, Glu-124, 155–156 (DG), and Asp-173. Asp-173 (proton acceptor) is an active-site residue. Residues 173-176 (DSSD) and Tyr-241 each bind putrescine.

The protein belongs to the spermidine/spermine synthase family. In terms of assembly, homodimer or homotetramer.

The enzyme catalyses S-adenosyl 3-(methylsulfanyl)propylamine + putrescine = S-methyl-5'-thioadenosine + spermidine + H(+). It functions in the pathway amine and polyamine biosynthesis; spermidine biosynthesis; spermidine from putrescine: step 1/1. The activity is thought to be regulated mainly by the availability of decarboxylated S-adenosylmethionine. Catalyzes the production of spermidine from putrescine and decarboxylated S-adenosylmethionine (dcSAM). Has a strong preference for putrescine as substrate, and has very low activity towards 1,3-diaminopropane. Has extremely low activity towards spermidine. This is Spermidine synthase (Srm) from Mus musculus (Mouse).